We begin with the raw amino-acid sequence, 735 residues long: Funoran endo-beta-hydrolase (735 aa).

The N-terminal stretch at 1–27 is a signal peptide; sequence MRVKSVYKKLSVSFILVMLSASQEVNS. Glu-200 (proton donor) is an active-site residue. Glu-322 (nucleophile) is an active-site residue.

The protein belongs to the glycosyl hydrolase 86 family.

The catalysed reaction is Endohydrolysis of beta-(1-&gt;4)-linkages between beta-D-galactopyranose-6-sulfate and 3,6-anhydro-alpha-L-galactopyranose units in funoran.. It catalyses the reaction Hydrolysis of (1-&gt;4)-beta-D-galactosidic linkages in agarose, giving the tetramer as the predominant product.. Agarase activity is enhanced in the presence of NaCl. Agarase activity is significantly inhibited by Zn(2+) and slightly activated by several divalent ions including Mg(2+), Cd(2+) and Ca(2+). Functionally, endohydrolase that cleaves the beta-1,4 glycosidic bond between beta-D-galactopyranose-6-sulfate (G6S) and 3,6-anhydro-alpha-L-galactopyranose (LA) unit of funoran, a polysaccharide produced by red algae of the genus Gloiopeltis. It releases the disaccharide LA-G6S as the predominant end product. Also acts as a random endo-acting beta-agarase, which can hydrolyze agarose tetrasaccharides and hexasaccharides, and produces disaccharides as smallest products. Besides typical agarose oligosaccharides, it can use methylated galactoses. The enzyme exhibits higher catalytic efficiency towards agarose, but binds funoran preferentially. Has no activity on porphyran. This chain is Funoran endo-beta-hydrolase, found in Wenyingzhuangia aestuarii.